A 202-amino-acid polypeptide reads, in one-letter code: Polyamine-modulated factor 1 (202 aa).

The span at 1–15 (MAEVSRDSEAAERGP) shows a compositional bias: basic and acidic residues. Positions 1–26 (MAEVSRDSEAAERGPEGSSPEAVPGD) are disordered. Residues 153–194 (EAKNQELADAVLAGRRQVEELQQQVRALQQTWQALHREQREL) are a coiled coil.

Component of the MIS12 complex composed of MIS12, DSN1, NSL1 and PMF1. Interacts with COPS7A. Interacts via its coiled-coil domain with the leucine-zipper domain of NFE2L2. The interaction with NFE2L2 is required for the transcriptional regulation of SSAT.

It localises to the nucleus. The protein localises to the chromosome. Its subcellular location is the centromere. The protein resides in the kinetochore. Functionally, part of the MIS12 complex which is required for normal chromosome alignment and segregation and for kinetochore formation during mitosis. May act as a cotranscription partner of NFE2L2 involved in regulation of polyamine-induced transcription of SSAT. The chain is Polyamine-modulated factor 1 from Mus musculus (Mouse).